The following is a 252-amino-acid chain: ATP synthase subunit a (252 aa).

A run of 7 helical transmembrane segments spans residues 6 to 26 (LEQF…YFSF), 31 to 51 (LFML…TLNG), 88 to 108 (FFPL…IGMI), 117 to 137 (HFII…IVGF), 144 to 164 (FFSI…LVLL), 190 to 212 (LVKI…YLGQ), and 225 to 245 (LELG…CIYL).

It belongs to the ATPase A chain family. F-type ATPases have 2 components, CF(1) - the catalytic core - and CF(0) - the membrane proton channel. CF(1) has five subunits: alpha(3), beta(3), gamma(1), delta(1), epsilon(1). CF(0) has three main subunits: a, b and c.

The protein resides in the mitochondrion inner membrane. Functionally, mitochondrial membrane ATP synthase (F(1)F(0) ATP synthase or Complex V) produces ATP from ADP in the presence of a proton gradient across the membrane which is generated by electron transport complexes of the respiratory chain. F-type ATPases consist of two structural domains, F(1) - containing the extramembraneous catalytic core and F(0) - containing the membrane proton channel, linked together by a central stalk and a peripheral stalk. During catalysis, ATP synthesis in the catalytic domain of F(1) is coupled via a rotary mechanism of the central stalk subunits to proton translocation. Key component of the proton channel; it may play a direct role in the translocation of protons across the membrane. This Marchantia polymorpha (Common liverwort) protein is ATP synthase subunit a (ATP6).